Here is a 379-residue protein sequence, read N- to C-terminus: NAD-dependent protein deacetylase sirtuin-2 (379 aa).

Positions 1-10 are enriched in basic and acidic residues; sequence MSEEVSKRVE. The disordered stretch occupies residues 1–32; it reads MSEEVSKRVEEEADTPGLEGQSDDSSDEGDAS. Over residues 21–32 the composition is skewed to acidic residues; it reads QSDDSSDEGDAS. Residues 55–335 form the Deacetylase sirtuin-type domain; that stretch reads KVLDELTLDS…MTLAELLGWK (281 aa). Residues 83-87, 93-95, and 165-168 each bind NAD(+); these read AGIST, DFR, and QNID. The active-site Proton acceptor is His185. Zn(2+)-binding residues include Cys193, Cys198, Cys219, and Cys222. NAD(+) contacts are provided by residues 260–261, 284–286, and Cys321; these read TS and NME. A compositionally biased stretch (basic and acidic residues) spans 349–361; it reads IDSKDAKKTDKEA. Residues 349–379 form a disordered region; it reads IDSKDAKKTDKEASQSSKSAVAEAEKTDKTE.

The protein belongs to the sirtuin family. Class I subfamily. It depends on Zn(2+) as a cofactor.

It localises to the cytoplasm. The protein localises to the nucleus. The enzyme catalyses N(6)-acetyl-L-lysyl-[protein] + NAD(+) + H2O = 2''-O-acetyl-ADP-D-ribose + nicotinamide + L-lysyl-[protein]. The catalysed reaction is N(6)-tetradecanoyl-L-lysyl-[protein] + NAD(+) + H2O = 2''-O-tetradecanoyl-ADP-D-ribose + nicotinamide + L-lysyl-[protein]. It catalyses the reaction N(6)-hexadecanoyl-L-lysyl-[protein] + NAD(+) + H2O = 2''-O-hexadecanoyl-ADP-D-ribose + nicotinamide + L-lysyl-[protein]. Its function is as follows. NAD-dependent protein deacetylase, which deacetylates internal lysines on histone and alpha-tubulin as well as many other proteins such as key transcription factors. Participates in the modulation of multiple and diverse biological processes such as cell cycle control, genomic integrity, microtubule dynamics, cell differentiation, metabolic networks, and autophagy. Plays a major role in the control of cell cycle progression and genomic stability. Deacetylates histone H4 at 'Lys-16' (H4K16ac) at the VEGFA promoter. Thereby contributes to regulate expression of vegfa, a key regulator of angiogenesis. In addition to protein deacetylase activity, also has activity toward long-chain fatty acyl groups and mediates protein-lysine demyristoylation and depalmitoylation of target proteins. The sequence is that of NAD-dependent protein deacetylase sirtuin-2 (sirt2) from Danio rerio (Zebrafish).